Here is a 343-residue protein sequence, read N- to C-terminus: UPF0284 protein Msed_0735 (343 aa).

The protein belongs to the UPF0284 family.

The polypeptide is UPF0284 protein Msed_0735 (Metallosphaera sedula (strain ATCC 51363 / DSM 5348 / JCM 9185 / NBRC 15509 / TH2)).